Here is a 120-residue protein sequence, read N- to C-terminus: NAD(P)H-quinone oxidoreductase subunit 3, chloroplastic (120 aa).

Helical transmembrane passes span 9–29 (IFWA…LISG), 64–84 (MFAL…PWAM), and 88–108 (VLGV…IVGS).

Belongs to the complex I subunit 3 family. As to quaternary structure, NDH is composed of at least 16 different subunits, 5 of which are encoded in the nucleus.

Its subcellular location is the plastid. The protein localises to the chloroplast thylakoid membrane. It carries out the reaction a plastoquinone + NADH + (n+1) H(+)(in) = a plastoquinol + NAD(+) + n H(+)(out). The catalysed reaction is a plastoquinone + NADPH + (n+1) H(+)(in) = a plastoquinol + NADP(+) + n H(+)(out). In terms of biological role, NDH shuttles electrons from NAD(P)H:plastoquinone, via FMN and iron-sulfur (Fe-S) centers, to quinones in the photosynthetic chain and possibly in a chloroplast respiratory chain. The immediate electron acceptor for the enzyme in this species is believed to be plastoquinone. Couples the redox reaction to proton translocation, and thus conserves the redox energy in a proton gradient. The protein is NAD(P)H-quinone oxidoreductase subunit 3, chloroplastic of Carica papaya (Papaya).